Reading from the N-terminus, the 359-residue chain is Mitochondrial glutathione transporter SLC25A39 (359 aa).

Over 1–14 (MADQDPAGISPLQQ) the chain is Mitochondrial intermembrane. 3 Solcar repeats span residues 9 to 151 (ISPL…LKAF), 159 to 243 (SDLY…VKSW), and 253 to 347 (TSVG…GKSF). Residues 15–35 (MVASGTGAVVTSLFMTPLDVV) form a helical membrane-spanning segment. Topologically, residues 36-121 (KVRLQSQRPS…VKIVRHEGTR (86 aa)) are mitochondrial matrix. [2Fe-2S] cluster is bound by residues cysteine 74, cysteine 78, cysteine 88, and cysteine 94. Residues 122 to 142 (TLWSGLPATLVMTVPATAIYF) traverse the membrane as a helical segment. Topologically, residues 143 to 160 (TAYDQLKAFLCGRALTSD) are mitochondrial intermembrane. Residues 161-181 (LYAPMVAGALARLGTVTVISP) traverse the membrane as a helical segment. Topologically, residues 182 to 214 (LELMRTKLQAQHVSYRELGACVRTAVAQGGWRS) are mitochondrial matrix. Residues 215–235 (LWLGWGPTALRDVPFSALYWF) traverse the membrane as a helical segment. The Mitochondrial intermembrane segment spans residues 236–258 (NYELVKSWLNGFRPKDQTSVGMS). The helical transmembrane segment at 259–279 (FVAGGISGTVAAVLTLPFDVV) threads the bilayer. Residues 280 to 317 (KTQRQVALGAMEAVRVNPLHVDSTWLLLRRIRAESGTK) are Mitochondrial matrix-facing. A helical membrane pass occupies residues 318–338 (GLFAGFLPRIIKAAPSCAIMI). Residues 339–359 (STYEFGKSFFQRLNQDRLLGG) are Mitochondrial intermembrane-facing.

This sequence belongs to the mitochondrial carrier (TC 2.A.29) family. Post-translationally, cleaved and degraded by AFG3L2; degradation by AFG3L2 is regulated by the ability of SLC25A39 to bind iron-sulfur. In absence of mitochondrial glutathione, SLC25A39 binds iron-sulfur, preventing cleavage and degradation by AFG3L2. The presence of mitochondrial glutathione prevents iron-sulfur-binding to SLC25A39, promoting cleavage and degradation by AFG3L2. In terms of tissue distribution, expressed in many tissues. Abundant in testis and kidney.

It is found in the mitochondrion inner membrane. It catalyses the reaction glutathione(in) = glutathione(out). With respect to regulation, the activity of SLC25A39 is regulated by levels of mitochondrial glutathione via its ability to bind [2Fe-2S] iron-sulfur cluster. Upon physiological levels of mitochondrial glutathione, glutathione prevents iron-sulfur-binding to SLC25A39 promoting cleavage and degradation by AFG3L2. Upon depletion of mitochondrial glutathione, SLC25A39 binds iron-sulfur, preventing cleavage and degradation by AFG3L2. Mitochondrial transporter required for glutathione import into mitochondria. Glutathione, which plays key roles in oxidative metabolism, is produced exclusively in the cytosol and is imported in many organelles. Mitochondrial glutathione is required for the activity and stability of proteins containing iron-sulfur clusters, as well as erythropoiesis. The polypeptide is Mitochondrial glutathione transporter SLC25A39 (Homo sapiens (Human)).